Here is an 897-residue protein sequence, read N- to C-terminus: Alanine--tRNA ligase (897 aa).

The Zn(2+) site is built by His-581, His-585, Cys-684, and His-688.

The protein belongs to the class-II aminoacyl-tRNA synthetase family. Zn(2+) is required as a cofactor.

The protein resides in the cytoplasm. It carries out the reaction tRNA(Ala) + L-alanine + ATP = L-alanyl-tRNA(Ala) + AMP + diphosphate. Its function is as follows. Catalyzes the attachment of alanine to tRNA(Ala) in a two-step reaction: alanine is first activated by ATP to form Ala-AMP and then transferred to the acceptor end of tRNA(Ala). Also edits incorrectly charged Ser-tRNA(Ala) and Gly-tRNA(Ala) via its editing domain. The protein is Alanine--tRNA ligase of Mycobacterium sp. (strain KMS).